A 153-amino-acid chain; its full sequence is Subtilisin propeptide-like protein (153 aa).

A signal peptide spans 1–27; sequence MKFLFAFNFFSLYIYLYEFLCIHLCGS. The dispensable for parasite growth in host erythrocytes stretch occupies residues 127–153; the sequence is QISHLSEFIQYLLNKNVCIEFNQNVML.

The protein localises to the secreted. It is found in the parasitophorous vacuole lumen. The protein resides in the cell membrane. In terms of biological role, acts as a specific inhibitor of subtilisin-like protease SUB1. This chain is Subtilisin propeptide-like protein, found in Plasmodium falciparum (isolate 3D7).